We begin with the raw amino-acid sequence, 1149 residues long: ATP-dependent helicase/deoxyribonuclease subunit B (1149 aa).

8 to 15 (GRAGSGKS) is a binding site for ATP. 4 residues coordinate [4Fe-4S] cluster: cysteine 788, cysteine 1106, cysteine 1109, and cysteine 1115.

Belongs to the helicase family. AddB/RexB type 1 subfamily. As to quaternary structure, heterodimer of AddA and AddB. Mg(2+) is required as a cofactor. [4Fe-4S] cluster serves as cofactor.

Its function is as follows. The heterodimer acts as both an ATP-dependent DNA helicase and an ATP-dependent, dual-direction single-stranded exonuclease. Recognizes the chi site generating a DNA molecule suitable for the initiation of homologous recombination. The AddB subunit has 5' -&gt; 3' nuclease activity but not helicase activity. The protein is ATP-dependent helicase/deoxyribonuclease subunit B of Ruminiclostridium cellulolyticum (strain ATCC 35319 / DSM 5812 / JCM 6584 / H10) (Clostridium cellulolyticum).